An 85-amino-acid chain; its full sequence is Small ribosomal subunit protein bS18A (85 aa).

This sequence belongs to the bacterial ribosomal protein bS18 family. As to quaternary structure, part of the 30S ribosomal subunit. Forms a tight heterodimer with protein bS6.

Binds as a heterodimer with protein bS6 to the central domain of the 16S rRNA, where it helps stabilize the platform of the 30S subunit. This is Small ribosomal subunit protein bS18A from Mycolicibacterium smegmatis (strain ATCC 700084 / mc(2)155) (Mycobacterium smegmatis).